The sequence spans 154 residues: Ribosome maturation factor RimP (154 aa).

The protein belongs to the RimP family.

It is found in the cytoplasm. Required for maturation of 30S ribosomal subunits. In Salmonella agona (strain SL483), this protein is Ribosome maturation factor RimP.